A 513-amino-acid chain; its full sequence is Palmitoyltransferase ZDHHC14 (513 aa).

Over 1 to 59 the chain is Cytoplasmic; sequence MHLGVEEPIRECQYNQICTHNSSPMDTPHIKKKKNKRKWQVFPGRNRFYCNGRIMMAKQ. Residues 60–80 traverse the membrane as a helical segment; sequence TGVFYLTMVLILVTSGLFFAF. Residues 81–88 are Lumenal-facing; the sequence is DCPFLASN. The chain crosses the membrane as a helical span at residues 89 to 109; it reads LTPAIPAIGGVLFVFVMGMLL. Residues 110 to 207 lie on the Cytoplasmic side of the membrane; sequence RASFSDPGVL…GNCVGRRNYR (98 aa). The DHHC domain maps to 164 to 214; sequence KYCFTCKIFRPPRASHCSLCDNCVDRFDHHCPWVGNCVGRRNYRFFYLFIL. C194 functions as the S-palmitoyl cysteine intermediate in the catalytic mechanism. The helical transmembrane segment at 208–228 threads the bilayer; the sequence is FFYLFILSLSFLTIFIFAFVI. Over 229–266 the chain is Lumenal; that stretch reads THVILNALRKALALSTAADFEAVQKDPTGLAFLVLSKT. A helical membrane pass occupies residues 267–287; sequence ALLDILEVVVCFFSVWSIVGL. At 288–513 the chain is on the cytoplasmic side; the sequence is SGFHTYLISS…VRGLVKLSSV (226 aa). Residues 348–369 are disordered; it reads FIQPDTPQPATQTNGTSACPPN. The span at 355-369 shows a compositional bias: polar residues; that stretch reads QPATQTNGTSACPPN.

Belongs to the DHHC palmitoyltransferase family. ERF2/ZDHHC9 subfamily.

Its subcellular location is the endoplasmic reticulum membrane. The protein resides in the golgi apparatus membrane. It catalyses the reaction L-cysteinyl-[protein] + hexadecanoyl-CoA = S-hexadecanoyl-L-cysteinyl-[protein] + CoA. Palmitoyltransferase that could catalyze the addition of palmitate onto various protein substrates. This is Palmitoyltransferase ZDHHC14 (zdhhc14) from Danio rerio (Zebrafish).